The chain runs to 254 residues: Fructose-1,6-bisphosphatase (254 aa).

4 residues coordinate Mg(2+): E68, D84, L86, and D87. Substrate-binding positions include 87–89, R171, I176, and R195; that span reads DGS. A Mg(2+)-binding site is contributed by D202.

The protein belongs to the inositol monophosphatase superfamily. FBPase class 4 family. Homodimer. The cofactor is Mg(2+).

It catalyses the reaction beta-D-fructose 1,6-bisphosphate + H2O = beta-D-fructose 6-phosphate + phosphate. Its activity is regulated as follows. Inhibited by Li(+), ADP, ATP and glucose-6-phosphate. Its function is as follows. Catalyzes the conversion of D-fructose 1,6-bisphosphate to D-fructose 6-phosphate. In vitro, also has weak activity with inositol-1-phosphate, glucose-1-phosphate and glycerol-2-phosphate. The polypeptide is Fructose-1,6-bisphosphatase (Pyrococcus furiosus (strain ATCC 43587 / DSM 3638 / JCM 8422 / Vc1)).